Consider the following 153-residue polypeptide: Regulatory protein RecX (153 aa).

This sequence belongs to the RecX family.

The protein localises to the cytoplasm. Modulates RecA activity. The polypeptide is Regulatory protein RecX (Mannheimia succiniciproducens (strain KCTC 0769BP / MBEL55E)).